Reading from the N-terminus, the 47-residue chain is Potassium channel toxin gamma-KTx 5.1 (47 aa).

Disulfide bonds link Cys5-Cys23, Cys11-Cys34, Cys20-Cys39, and Cys24-Cys41.

Belongs to the ergtoxin family. Gamma-KTx 5 subfamily. As to expression, expressed by the venom gland.

The protein localises to the secreted. Functionally, reversibly blocks Kv11/ERG potassium channels. The chain is Potassium channel toxin gamma-KTx 5.1 from Centruroides sculpturatus (Arizona bark scorpion).